We begin with the raw amino-acid sequence, 287 residues long: Large ribosomal subunit protein uL2 (287 aa).

Residues Arg-221–Ser-287 are disordered. Over residues Lys-258–Ser-287 the composition is skewed to basic residues.

Belongs to the universal ribosomal protein uL2 family. In terms of assembly, part of the 50S ribosomal subunit. Forms a bridge to the 30S subunit in the 70S ribosome.

One of the primary rRNA binding proteins. Required for association of the 30S and 50S subunits to form the 70S ribosome, for tRNA binding and peptide bond formation. It has been suggested to have peptidyltransferase activity; this is somewhat controversial. Makes several contacts with the 16S rRNA in the 70S ribosome. This is Large ribosomal subunit protein uL2 from Prochlorococcus marinus (strain MIT 9303).